Consider the following 181-residue polypeptide: MQKEIRRDDIIGSRRFSNYFWAVFLCSGGISFLLAGISSYFKINFLPFANPKELAFIPQGLVMSFYGTLSIALAIYILGTLFWDIGSGYNEYNKVENLVKIVRKGFPGKNREILLTYPLTNIRAIGIKISEGLNPKRSIYLCLKDERQIPLTPVQQPNSISNLEEEAAELAKFLDLKLENL.

2 consecutive transmembrane segments (helical) span residues 19–41 (YFWAVFLCSGGISFLLAGISSYF) and 61–83 (LVMSFYGTLSIALAIYILGTLFW).

It belongs to the Ycf4 family.

It localises to the plastid. Its subcellular location is the chloroplast thylakoid membrane. In terms of biological role, seems to be required for the assembly of the photosystem I complex. The protein is Photosystem I assembly protein Ycf4 of Trieres chinensis (Marine centric diatom).